We begin with the raw amino-acid sequence, 325 residues long: Electron transfer flavoprotein subunit alpha (325 aa).

262 to 290 (LYIACGISGAIQHLAGMSNSKVIVAINKD) contributes to the FAD binding site.

The protein belongs to the ETF alpha-subunit/FixB family. Heterodimer of an alpha and a beta subunit. The cofactor is FAD.

The electron transfer flavoprotein serves as a specific electron acceptor for other dehydrogenases. It transfers the electrons to the main respiratory chain via ETF-ubiquinone oxidoreductase (ETF dehydrogenase). The protein is Electron transfer flavoprotein subunit alpha (etfA) of Bacillus subtilis (strain 168).